Here is a 39-residue protein sequence, read N- to C-terminus: Phosphate starvation-inducible protein 1 (39 aa).

The protein resides in the cell outer membrane. The protein is Phosphate starvation-inducible protein 1 of Pseudomonas fluorescens.